The primary structure comprises 195 residues: 7-methyl-GTP pyrophosphatase (195 aa).

The active-site Proton acceptor is the Asp-71.

Belongs to the Maf family. YceF subfamily. Requires a divalent metal cation as cofactor.

It localises to the cytoplasm. It carries out the reaction N(7)-methyl-GTP + H2O = N(7)-methyl-GMP + diphosphate + H(+). Its function is as follows. Nucleoside triphosphate pyrophosphatase that hydrolyzes 7-methyl-GTP (m(7)GTP). May have a dual role in cell division arrest and in preventing the incorporation of modified nucleotides into cellular nucleic acids. The chain is 7-methyl-GTP pyrophosphatase from Shewanella oneidensis (strain ATCC 700550 / JCM 31522 / CIP 106686 / LMG 19005 / NCIMB 14063 / MR-1).